The following is a 67-amino-acid chain: Beta-defensin 123 (67 aa).

Positions 1–20 are cleaved as a signal peptide; it reads MKLLLLTLTVLLLLSQLTPG. Cystine bridges form between cysteine 25–cysteine 52, cysteine 32–cysteine 46, and cysteine 36–cysteine 53.

It belongs to the beta-defensin family.

Its subcellular location is the secreted. Its function is as follows. Has antibacterial activity. This is Beta-defensin 123 (DEFB123) from Pongo pygmaeus (Bornean orangutan).